The following is a 365-amino-acid chain: NADH-quinone oxidoreductase subunit H 2 (365 aa).

8 helical membrane passes run 1–21 (MFVV…VVWA), 71–91 (LAPV…PFAP), 100–120 (VGVF…FLAG), 136–156 (IAQV…VVLI), 199–219 (FVSW…VFFI), 254–274 (ILFL…VVLF), 301–321 (IAGY…VVFL), and 342–362 (WKIL…WVVW).

Belongs to the complex I subunit 1 family. As to quaternary structure, NDH-1 is composed of 14 different subunits. Subunits NuoA, H, J, K, L, M, N constitute the membrane sector of the complex.

It localises to the cell inner membrane. The enzyme catalyses a quinone + NADH + 5 H(+)(in) = a quinol + NAD(+) + 4 H(+)(out). NDH-1 shuttles electrons from NADH, via FMN and iron-sulfur (Fe-S) centers, to quinones in the respiratory chain. The immediate electron acceptor for the enzyme in this species is believed to be ubiquinone. Couples the redox reaction to proton translocation (for every two electrons transferred, four hydrogen ions are translocated across the cytoplasmic membrane), and thus conserves the redox energy in a proton gradient. This subunit may bind ubiquinone. The protein is NADH-quinone oxidoreductase subunit H 2 of Cytophaga hutchinsonii (strain ATCC 33406 / DSM 1761 / CIP 103989 / NBRC 15051 / NCIMB 9469 / D465).